The chain runs to 229 residues: uncharacterized protein (229 aa).

This is an uncharacterized protein from Methanocaldococcus jannaschii (strain ATCC 43067 / DSM 2661 / JAL-1 / JCM 10045 / NBRC 100440) (Methanococcus jannaschii).